A 227-amino-acid polypeptide reads, in one-letter code: Cytochrome c oxidase subunit 2 (227 aa).

The Mitochondrial intermembrane segment spans residues 1-26; the sequence is MATWSNFNLQNSASPLMEQIIFFHDH. A helical transmembrane segment spans residues 27 to 51; it reads TLVILIMITILVGYLMISLFFNSYI. At 52-62 the chain is on the mitochondrial matrix side; sequence NRFLLEGQMIE. A helical membrane pass occupies residues 63 to 81; the sequence is LIWTILPAITLIFIALPSL. The Mitochondrial intermembrane portion of the chain corresponds to 82–227; sequence RLLYLLDELN…NFINWINNYS (146 aa). 6 residues coordinate Cu cation: His161, Cys196, Glu198, Cys200, His204, and Met207. Residue Glu198 participates in Mg(2+) binding.

It belongs to the cytochrome c oxidase subunit 2 family. Component of the cytochrome c oxidase (complex IV, CIV), a multisubunit enzyme composed of a catalytic core of 3 subunits and several supernumerary subunits. The complex exists as a monomer or a dimer and forms supercomplexes (SCs) in the inner mitochondrial membrane with ubiquinol-cytochrome c oxidoreductase (cytochrome b-c1 complex, complex III, CIII). Cu cation serves as cofactor.

It is found in the mitochondrion inner membrane. It catalyses the reaction 4 Fe(II)-[cytochrome c] + O2 + 8 H(+)(in) = 4 Fe(III)-[cytochrome c] + 2 H2O + 4 H(+)(out). Its function is as follows. Component of the cytochrome c oxidase, the last enzyme in the mitochondrial electron transport chain which drives oxidative phosphorylation. The respiratory chain contains 3 multisubunit complexes succinate dehydrogenase (complex II, CII), ubiquinol-cytochrome c oxidoreductase (cytochrome b-c1 complex, complex III, CIII) and cytochrome c oxidase (complex IV, CIV), that cooperate to transfer electrons derived from NADH and succinate to molecular oxygen, creating an electrochemical gradient over the inner membrane that drives transmembrane transport and the ATP synthase. Cytochrome c oxidase is the component of the respiratory chain that catalyzes the reduction of oxygen to water. Electrons originating from reduced cytochrome c in the intermembrane space (IMS) are transferred via the dinuclear copper A center (CU(A)) of subunit 2 and heme A of subunit 1 to the active site in subunit 1, a binuclear center (BNC) formed by heme A3 and copper B (CU(B)). The BNC reduces molecular oxygen to 2 water molecules using 4 electrons from cytochrome c in the IMS and 4 protons from the mitochondrial matrix. The sequence is that of Cytochrome c oxidase subunit 2 (COII) from Choristoneura rosaceana (Oblique banded leafroller).